A 987-amino-acid polypeptide reads, in one-letter code: Probable outer membrane protein PmpG (987 aa).

The N-terminal stretch at 1 to 25 (MMQTPFHKFFLLAMLSYSLLQGGHA) is a signal peptide. An Autotransporter domain is found at 707–987 (GRAYCRGIWI…GLSIGSKIRF (281 aa)).

Belongs to the PMP outer membrane protein family.

It is found in the secreted. The protein localises to the cell wall. The protein resides in the cell outer membrane. The chain is Probable outer membrane protein PmpG (pmpG) from Chlamydia muridarum (strain MoPn / Nigg).